The primary structure comprises 167 residues: Protein-export protein SecB (167 aa).

Belongs to the SecB family. In terms of assembly, homotetramer, a dimer of dimers. One homotetramer interacts with 1 SecA dimer.

The protein localises to the cytoplasm. One of the proteins required for the normal export of preproteins out of the cell cytoplasm. It is a molecular chaperone that binds to a subset of precursor proteins, maintaining them in a translocation-competent state. It also specifically binds to its receptor SecA. This is Protein-export protein SecB from Idiomarina loihiensis (strain ATCC BAA-735 / DSM 15497 / L2-TR).